Reading from the N-terminus, the 867-residue chain is MRARYMLGFGVLCLLTWAVYVSESSPTDKQAKLRLMSVRRARQNKSRQGQIIKTRASSTWINDKRQQMQGDEGVQFRRNVQSRKVLAQRRPAQGGTRNPIQQDDGTPGARARVSRMPSSAGSPNLLASFAGKNRLLVISAPHDSDGYYRLMMSLLKPEVYCELAERHVHQIVMFHQEGELGGKIRRITNEGKVMEEPLDTALIPRLMTFLKLEKGKFGMVLLKKTLQVEERYPYPVRLEAMYEVIDQSPMRKMEKVRQKGFVQKCKGAGVEGQVVEGVLTTDSQVDPPTERRKEIRKPIRRPTTTTTPAPTRPTTTTTTTKATTTTTTRPPTTTRSTTTTTTTTTTTTRPTTTTTRTTTTPRTTRANTTPQWIPAHKTTAEPYYYNRRDRYQTTSPPTDSARYRDNHTSKKEYNHRHTNTIPTQHKPTKVRPTKKKNGDKDISNAYEEKYDVGVPTDAYPEEKEEEIVPTKRGKGKTDKKKKKDKTDKLSKKDKAERRGKDGKGGKKNGKKVPKILEKEDYQKPTKRPPPPPPPKGTLATFLDYFESRRRLILITSPTEENSMYIQQRDEYLEHVCEMAIRKVTIITIFGTFRNSTMKIDHYQLEKDKPMKGLRQEDLENQDLIMELRKEYGMTYNDFYVVLTDLDMKAKQYYEVPIAMKAVFDYIDTFSSRIREMEQQKRDGVTCKKEDKPRSLENFLSRFRWRRRLFVISAPNDEEWAYQQQLYALTSQACNLGLRHVSVLKLVGTDLLDMGGVLELYPINGSATVEREGISATLVRDIRNYFQISPEYFSMLLVGKDGNVKSWYPSPMWSMAIIYDLIDSMQLRRQEMAIQQSLGMRCPEDEYGGYGYHHHEGYQEGYHQGYGY.

Positions Met1–Ala18 are cleaved as a signal peptide. Disordered regions lie at residues Arg83–Gly121 and Asp282–Ala539. Positions Gly95–Asp104 are enriched in polar residues. Basic and acidic residues predominate over residues Pro288–Lys297. A compositionally biased stretch (low complexity) spans Arg301 to Pro370. Residues Ala401 to Glu412 are compositionally biased toward basic and acidic residues. The segment covering Lys426–Lys435 has biased composition (basic residues). The segment covering Lys436 to Asp451 has biased composition (basic and acidic residues). Positions Lys471–Lys483 are enriched in basic residues. Composition is skewed to basic and acidic residues over residues Asp484–Gly504 and Lys514–Lys523.

Belongs to the CCDC80 family. In terms of assembly, binds to various extracellular matrix proteins.

The protein localises to the secreted. It localises to the extracellular space. It is found in the extracellular matrix. Promotes cell adhesion and matrix assembly. This chain is Coiled-coil domain-containing protein 80 (ccdc80), found in Danio rerio (Zebrafish).